The chain runs to 109 residues: Nucleoid-associated protein HD_0326 (109 aa).

It belongs to the YbaB/EbfC family. Homodimer.

It localises to the cytoplasm. The protein localises to the nucleoid. Its function is as follows. Binds to DNA and alters its conformation. May be involved in regulation of gene expression, nucleoid organization and DNA protection. In Haemophilus ducreyi (strain 35000HP / ATCC 700724), this protein is Nucleoid-associated protein HD_0326.